Here is a 296-residue protein sequence, read N- to C-terminus: tRNA pseudouridine synthase B (296 aa).

Asp-38 serves as the catalytic Nucleophile.

Belongs to the pseudouridine synthase TruB family. Type 1 subfamily.

It catalyses the reaction uridine(55) in tRNA = pseudouridine(55) in tRNA. Responsible for synthesis of pseudouridine from uracil-55 in the psi GC loop of transfer RNAs. This Synechocystis sp. (strain ATCC 27184 / PCC 6803 / Kazusa) protein is tRNA pseudouridine synthase B.